The following is a 285-amino-acid chain: Gas vesicle protein C2 (285 aa).

Tandem repeats lie at residues 22–52, 53–84, 85–122, 123–155, 156–188, and 189–220. Residues 22–220 are 6 X approximate tandem repeats; it reads EAMDAYAEEF…ADDTTAQTDV (199 aa).

This sequence belongs to the halobacterial gas vesicle GvpC family.

The protein resides in the gas vesicle. Functionally, confers stability, involved in shaping gas vesicles (GV), hollow, gas filled proteinaceous nanostructures. GVs allow positioning of halobacteria at an optimal depth for growth in the poorly aerated, shallow brine pools of their habitat. Its function is as follows. Expression of 2 c-vac DNA fragments containing 2 divergently transcribed regions (gvpE-gvpF-gvpG-gvpH-gvpI-gvpJ-gvpK-gvpL-gvpM and gvpA-gvpC-gvpN-gvpO) allows H.volcanii to produce gas vesicles. The protein is Gas vesicle protein C2 of Halobacterium salinarum (strain ATCC 700922 / JCM 11081 / NRC-1) (Halobacterium halobium).